A 75-amino-acid chain; its full sequence is Probable [Fe-S]-dependent transcriptional repressor (75 aa).

Cysteine 55, cysteine 60, cysteine 63, and cysteine 72 together coordinate iron-sulfur cluster.

This sequence belongs to the FeoC family.

May function as a transcriptional regulator that controls feoABC expression. The sequence is that of Probable [Fe-S]-dependent transcriptional repressor from Serratia marcescens.